The sequence spans 285 residues: Vacuolar protein sorting-associated protein 37B (285 aa).

The segment at Ala-50–Pro-170 is interaction with IST1. The VPS37 C-terminal domain maps to Phe-84–Gly-173. Disordered regions lie at residues Gln-167–Pro-215 and Pro-242–Gln-285. Composition is skewed to pro residues over residues Gly-173–Ser-184 and Arg-206–Pro-215. A compositionally biased stretch (polar residues) spans Pro-250 to Leu-259. Pro residues predominate over residues Pro-262 to Met-275. The span at Ala-276 to Gln-285 shows a compositional bias: low complexity.

The protein belongs to the VPS37 family. In terms of assembly, component of the ESCRT-I complex (endosomal sorting complex required for transport I) which consists of TSG101, VPS28, a VPS37 protein (VPS37A to -D) and MVB12A or MVB12B in a 1:1:1:1 stoichiometry. Interacts with TSG101, VPS28, MVB12A and MVB12B. Component of the ESCRT-I complex (endosomal sorting complex required for transport I) which consists of TSG101, VPS28, a VPS37 protein (VPS37A to -D) and UBAP1 in a 1:1:1:1 stoichiometry. Interacts with CEP55. Interacts with IST1.

It localises to the late endosome membrane. Functionally, component of the ESCRT-I complex, a regulator of vesicular trafficking process. Required for the sorting of endocytic ubiquitinated cargos into multivesicular bodies. May be involved in cell growth and differentiation. This chain is Vacuolar protein sorting-associated protein 37B (Vps37b), found in Mus musculus (Mouse).